Consider the following 424-residue polypeptide: MEEIPSLVIDPGSCWTRFGYAGEESPMTILPSYYGVRSDVTGRNKYVVDELQIHAPIPGMEVKNGKSNGIIQDWESTLYTWERGLKEKLQVNPTEYAMMITEPSWNPQSVRQQIMEAAFEQLHVPAFYLTKQAVCVAFANSKSTALIVDIGSDNASVTPVVDGLIIRKGIFKQSLAGDFLNANIEQLFNTMNIEFPPHYRIARKSVAIQQSGNMANGSADAVKPAVLYPPIQDLTSSYEIFQKRRVIEEWKESVLDVLDTPFDEAKASSRNPKPFEFPDGVTHKFGQERFRISEILFNPSFSASRSAETTPPQGSVGLHELVYQSILACDSELRSPLLNNIVVTGGTSLIPGLSERLQAEVQRLATGSRINVHTAETASATSNAVWFGGSILASLDNFQHLWVSKQEYDEVGVDRALFVEKRCK.

It belongs to the actin family. Component of the RSC complex composed of at least arp9, arp42, rsc1, rsc4, rsc7, rsc9, rsc58, sfh1, snf21, ssr1, ssr2, ssr3 and ssr4. The complex interacts with histone and histone variant components of centromeric chromatin. Component of the SWI/SNF global transcription activator complex composed of at least arp9, arp42, snf5, snf22, snf30, sbf59, sol1, ssr1, ssr2, ssr3, ssr4 and tfg3.

The protein localises to the cytoplasm. It is found in the nucleus. Its function is as follows. Component of the chromatin structure remodeling complex (RSC), which is involved in transcription regulation and nucleosome positioning. Controls particularly membrane and organelle development genes. Part of the SWI/SNF complex, an ATP-dependent chromatin remodeling complex, required for the positive and negative regulation of gene expression of a large number of genes. It changes chromatin structure by altering DNA-histone contacts within a nucleosome, leading eventually to a change in nucleosome position, thus facilitating or repressing binding of gene-specific transcription factors. This chain is SWI/SNF and RSC complexes subunit arp42 (arp42), found in Schizosaccharomyces pombe (strain 972 / ATCC 24843) (Fission yeast).